The following is a 478-amino-acid chain: Membrane-bound lytic murein transglycosylase F (478 aa).

Residues 1 to 22 (MTRFLFAIILGLLLTACQQETV) form the signal peptide. The segment at 23 to 257 (EETEFVPHKL…HLNEKYFGHV (235 aa)) is non-LT domain. The LT domain stretch occupies residues 258-478 (KRFDYIDTRA…PGTLSPDKPK (221 aa)). Glu-302 is a catalytic residue. A disordered region spans residues 447–478 (KQQNSEEVAPSDLTAEETPVPAPGTLSPDKPK).

The protein in the N-terminal section; belongs to the bacterial solute-binding protein 3 family. This sequence in the C-terminal section; belongs to the transglycosylase Slt family.

The protein resides in the cell outer membrane. It catalyses the reaction Exolytic cleavage of the (1-&gt;4)-beta-glycosidic linkage between N-acetylmuramic acid (MurNAc) and N-acetylglucosamine (GlcNAc) residues in peptidoglycan, from either the reducing or the non-reducing ends of the peptidoglycan chains, with concomitant formation of a 1,6-anhydrobond in the MurNAc residue.. Functionally, murein-degrading enzyme that degrades murein glycan strands and insoluble, high-molecular weight murein sacculi, with the concomitant formation of a 1,6-anhydromuramoyl product. Lytic transglycosylases (LTs) play an integral role in the metabolism of the peptidoglycan (PG) sacculus. Their lytic action creates space within the PG sacculus to allow for its expansion as well as for the insertion of various structures such as secretion systems and flagella. This is Membrane-bound lytic murein transglycosylase F from Shewanella oneidensis (strain ATCC 700550 / JCM 31522 / CIP 106686 / LMG 19005 / NCIMB 14063 / MR-1).